Consider the following 151-residue polypeptide: Transcriptional regulator MraZ (151 aa).

SpoVT-AbrB domains are found at residues 5-52 and 81-124; these read ANAI…PLSE and AVDL…DEDA.

The protein belongs to the MraZ family. In terms of assembly, forms oligomers.

The protein localises to the cytoplasm. It localises to the nucleoid. In Pseudomonas syringae pv. tomato (strain ATCC BAA-871 / DC3000), this protein is Transcriptional regulator MraZ.